The sequence spans 275 residues: Ceramide synthase (275 aa).

The 228-residue stretch at 34–261 folds into the TLC domain; sequence ADAVIVSARL…ICRGACRLFR (228 aa). 4 consecutive transmembrane segments (helical) span residues 130–150, 159–179, 194–214, and 232–252; these read FLMV…SVVW, LGCM…KILI, ALML…LYWA, and AHVN…FFLI.

Each isoform has a distinct expression pattern. Isoform 1 is highly expressed in brain. Isoform 2 is expressed at low levels, if any, in all analyzed tissues, with slightly higher levels in testis. Isoform 3 is expressed at very high levels in testis and, at lower levels, in white adipose tissue. In epididymal fat, isoform 3 is expressed at higher levels in obese mice compared with lean mice. By contrast, isoform 1 and 2 levels are significantly lower in obese mice compared with lean mice.

Its subcellular location is the golgi apparatus membrane. The protein localises to the endoplasmic reticulum membrane. The enzyme catalyses sphing-4-enine + octadecanoyl-CoA = N-octadecanoylsphing-4-enine + CoA + H(+). The catalysed reaction is eicosanoyl-CoA + sphing-4-enine = N-eicosanoyl-sphing-4-enine + CoA + H(+). It catalyses the reaction sphing-4-enine + hexadecanoyl-CoA = N-hexadecanoylsphing-4-enine + CoA + H(+). Involved in ceramide synthesis. In vitro, isoform 3 stimulates the production of C16-, C18- and C20-ceramides, isoform 1 slightly increases the levels of C18- and C20-ceramides, while isoform 2 exhibits only minimal activity. May interfere with adipogenesis by stimulating ceramide synthesis. The sequence is that of Ceramide synthase (Tlcd3b) from Mus musculus (Mouse).